Consider the following 1447-residue polypeptide: Bud site selection protein 4 (1447 aa).

Over residues 1 to 16 the composition is skewed to basic and acidic residues; sequence MHDAESTVDSLLKEID. 2 disordered regions span residues 1–38 and 57–76; these read MHDA…PHNW and NTRS…KMST. Phosphoserine is present on Ser-10. Polar residues-rich tracts occupy residues 22–32 and 59–76; these read TKSNITQNGSE and RSNA…KMST. Residues Ser-78, Ser-81, Ser-91, Ser-96, and Ser-167 each carry the phosphoserine modification. The segment at 272 to 316 is disordered; sequence NLPSKLLNTSNNSHSDSRSPTASVEDLNISTNLPGADSSQNNPVT. The span at 277-316 shows a compositional bias: polar residues; sequence LLNTSNNSHSDSRSPTASVEDLNISTNLPGADSSQNNPVT. Thr-365 bears the Phosphothreonine mark. Ser-367 carries the phosphoserine modification. The disordered stretch occupies residues 444-479; the sequence is HQESEHANEQPAIIPQKDSSEETFTELNNESEFQRN. Ser-511 carries the phosphoserine modification. The interval 529-591 is disordered; that stretch reads KTSAEEHDLS…NEEPEHVPLL (63 aa). Residues 538 to 548 show a composition bias toward polar residues; the sequence is SSSCEDQSVSE. A compositionally biased stretch (basic and acidic residues) spans 549–580; that stretch reads ARNKDRIEEKEVETKDENIETEKDESEYHKVE. Residue Ser-616 is modified to Phosphoserine. Residues 648–664 show a composition bias toward polar residues; that stretch reads ANSQFSQQSSITTASTV. The interval 648–673 is disordered; the sequence is ANSQFSQQSSITTASTVDSKKDNGST. The segment at 768–879 is interaction with IQG1; the sequence is EHENIPLSTH…SLWESSYELK (112 aa). Residues Ser-805 and Ser-811 each carry the phosphoserine modification. The 112-residue stretch at 1302–1413 folds into the PH domain; the sequence is NIYKEGYLLQ…WYNKLQEVVE (112 aa).

As to quaternary structure, interacts with AXL1, AXL2, IQG1 and SEC3. Post-translationally, phosphorylated by CDC28.

The protein resides in the bud neck. In terms of biological role, required for establishment of the axial budding pattern in haploid cells. Cooperates with other bud site selection proteins to recognize a spatial landmark during mitosis and they subsequently become a landmark for downstream polarity establishment factors that coordinate axial budding and cytokinesis. Involved in the septin organization at the bud neck. This is Bud site selection protein 4 (BUD4) from Saccharomyces cerevisiae (strain ATCC 204508 / S288c) (Baker's yeast).